Consider the following 304-residue polypeptide: Olfactory receptor 8G2 (304 aa).

The Extracellular portion of the chain corresponds to 1 to 41 (MVFLSSVETDQRKMSAGNHSSVTEFILAGLSEQPELQLRLF). N-linked (GlcNAc...) asparagine glycosylation occurs at N18. A helical transmembrane segment spans residues 42-62 (LLFLGIYVVTVVGNLSMITLI). Residues 63 to 69 (GLSSHLH) lie on the Cytoplasmic side of the membrane. The chain crosses the membrane as a helical span at residues 70–90 (TPMYYFLSGLSFIDLCHSTII). Residues 91–110 (TPKMLVNFVTEKNIISYPEC) are Extracellular-facing. A disulfide bridge connects residues C110 and C192. Residues 111 to 130 (MTQLYFFLIFAIAECHMLAV) form a helical membrane-spanning segment. Over 131–154 (TAYDRYVAICSPLLYNVIMSYHHC) the chain is Cytoplasmic. Residues 155–175 (FWLTVGVYVLGILGSTIHTGF) traverse the membrane as a helical segment. Over 176–193 (MLRLFLCKTNVINHYFCD) the chain is Extracellular. The chain crosses the membrane as a helical span at residues 194–214 (LFPLLGLSCSSTYINELLVLV). Over 215–217 (LSA) the chain is Cytoplasmic. Residues 218-238 (FNILTPALTILASYIFIIASI) traverse the membrane as a helical segment. Topologically, residues 239 to 257 (LRIRSTEGRSKAFSTCSSH) are extracellular. The helical transmembrane segment at 258–278 (ILAVAVFFGSAAFMYLQPSSV) threads the bilayer. Residues 279–304 (SSMDQRKVSSVFYTTIVPMLNPQSIA) are Cytoplasmic-facing.

The protein belongs to the G-protein coupled receptor 1 family.

The protein resides in the cell membrane. Its function is as follows. Odorant receptor. In Homo sapiens (Human), this protein is Olfactory receptor 8G2.